Here is a 219-residue protein sequence, read N- to C-terminus: Carbonic anhydrase 1 (219 aa).

Residues C39, D41, H98, and C101 each contribute to the Zn(2+) site.

This sequence belongs to the beta-class carbonic anhydrase family. As to quaternary structure, oligomer. Zn(2+) is required as a cofactor.

The enzyme catalyses hydrogencarbonate + H(+) = CO2 + H2O. Reversible hydration of carbon dioxide. Carbon dioxide formed in the bicarbonate-dependent decomposition of cyanate by cyanase (CynS) diffuses out of the cell faster than it would be hydrated to bicarbonate, so the apparent function of this enzyme is to catalyze the hydration of carbon dioxide and thus prevent depletion of cellular bicarbonate. This Escherichia coli O157:H7 protein is Carbonic anhydrase 1 (cynT).